Here is a 255-residue protein sequence, read N- to C-terminus: Flap endonuclease Xni (255 aa).

Position 105 (Asp105) interacts with Mg(2+). The 5'-3' exonuclease domain maps to 162-254 (EHKQFIDYLA…LKQFRLPKAN (93 aa)). Residues Leu172, Ala173, Pro181, Val183, and Ile186 each contribute to the K(+) site. The segment at 185–190 (GIGPKS) is interaction with DNA.

This sequence belongs to the Xni family. It depends on Mg(2+) as a cofactor. The cofactor is K(+).

Functionally, has flap endonuclease activity. During DNA replication, flap endonucleases cleave the 5'-overhanging flap structure that is generated by displacement synthesis when DNA polymerase encounters the 5'-end of a downstream Okazaki fragment. The protein is Flap endonuclease Xni of Shewanella piezotolerans (strain WP3 / JCM 13877).